The chain runs to 224 residues: Octanoyltransferase (224 aa).

A BPL/LPL catalytic domain is found at 45-223 (PSNKQAVWML…SLNKRFGLLW (179 aa)). Residues 87–94 (RGGDVTHH), 154–156 (SIG), and 167–169 (GIA) contribute to the substrate site. C185 (acyl-thioester intermediate) is an active-site residue.

It belongs to the LipB family.

It localises to the cytoplasm. It carries out the reaction octanoyl-[ACP] + L-lysyl-[protein] = N(6)-octanoyl-L-lysyl-[protein] + holo-[ACP] + H(+). It participates in protein modification; protein lipoylation via endogenous pathway; protein N(6)-(lipoyl)lysine from octanoyl-[acyl-carrier-protein]: step 1/2. In terms of biological role, catalyzes the transfer of endogenously produced octanoic acid from octanoyl-acyl-carrier-protein onto the lipoyl domains of lipoate-dependent enzymes. Lipoyl-ACP can also act as a substrate although octanoyl-ACP is likely to be the physiological substrate. The protein is Octanoyltransferase of Prochlorococcus marinus (strain SARG / CCMP1375 / SS120).